Reading from the N-terminus, the 404-residue chain is Formate-dependent phosphoribosylglycinamide formyltransferase (404 aa).

N(1)-(5-phospho-beta-D-ribosyl)glycinamide-binding positions include 27–28 (EL) and Glu-87. Residues Arg-120, Lys-162, 167 to 172 (SSGKGQ), 202 to 205 (EGFI), and Glu-210 contribute to the ATP site. One can recognise an ATP-grasp domain in the interval 125 to 320 (RLAAETLGLP…EFELHARALL (196 aa)). 2 residues coordinate Mg(2+): Glu-279 and Glu-291. N(1)-(5-phospho-beta-D-ribosyl)glycinamide contacts are provided by residues Asp-298, Lys-367, and 374 to 375 (RR).

The protein belongs to the PurK/PurT family. Homodimer.

The catalysed reaction is N(1)-(5-phospho-beta-D-ribosyl)glycinamide + formate + ATP = N(2)-formyl-N(1)-(5-phospho-beta-D-ribosyl)glycinamide + ADP + phosphate + H(+). Its pathway is purine metabolism; IMP biosynthesis via de novo pathway; N(2)-formyl-N(1)-(5-phospho-D-ribosyl)glycinamide from N(1)-(5-phospho-D-ribosyl)glycinamide (formate route): step 1/1. Involved in the de novo purine biosynthesis. Catalyzes the transfer of formate to 5-phospho-ribosyl-glycinamide (GAR), producing 5-phospho-ribosyl-N-formylglycinamide (FGAR). Formate is provided by PurU via hydrolysis of 10-formyl-tetrahydrofolate. This chain is Formate-dependent phosphoribosylglycinamide formyltransferase, found in Bordetella pertussis (strain Tohama I / ATCC BAA-589 / NCTC 13251).